A 613-amino-acid polypeptide reads, in one-letter code: Phosphomethylpyrimidine synthase (613 aa).

Residues Asn-215, Met-244, Tyr-273, His-309, 329-331 (SRG), 370-373 (DGLR), and Glu-409 contribute to the substrate site. A Zn(2+)-binding site is contributed by His-413. Tyr-436 lines the substrate pocket. A Zn(2+)-binding site is contributed by His-477. Residues Cys-557, Cys-560, and Cys-565 each coordinate [4Fe-4S] cluster.

It belongs to the ThiC family. Homodimer. Requires [4Fe-4S] cluster as cofactor.

It carries out the reaction 5-amino-1-(5-phospho-beta-D-ribosyl)imidazole + S-adenosyl-L-methionine = 4-amino-2-methyl-5-(phosphooxymethyl)pyrimidine + CO + 5'-deoxyadenosine + formate + L-methionine + 3 H(+). It functions in the pathway cofactor biosynthesis; thiamine diphosphate biosynthesis. Catalyzes the synthesis of the hydroxymethylpyrimidine phosphate (HMP-P) moiety of thiamine from aminoimidazole ribotide (AIR) in a radical S-adenosyl-L-methionine (SAM)-dependent reaction. This chain is Phosphomethylpyrimidine synthase, found in Paramagnetospirillum magneticum (strain ATCC 700264 / AMB-1) (Magnetospirillum magneticum).